A 203-amino-acid polypeptide reads, in one-letter code: Protein GrpE (203 aa).

Over residues 1–20 (MSDNGDNNTKSPQHNNPQPN) the composition is skewed to polar residues. A disordered region spans residues 1 to 46 (MSDNGDNNTKSPQHNNPQPNEKSDGKVQPGQPQVNPQRKFTAGINK).

It belongs to the GrpE family. As to quaternary structure, homodimer.

The protein resides in the cytoplasm. In terms of biological role, participates actively in the response to hyperosmotic and heat shock by preventing the aggregation of stress-denatured proteins, in association with DnaK and GrpE. It is the nucleotide exchange factor for DnaK and may function as a thermosensor. Unfolded proteins bind initially to DnaJ; upon interaction with the DnaJ-bound protein, DnaK hydrolyzes its bound ATP, resulting in the formation of a stable complex. GrpE releases ADP from DnaK; ATP binding to DnaK triggers the release of the substrate protein, thus completing the reaction cycle. Several rounds of ATP-dependent interactions between DnaJ, DnaK and GrpE are required for fully efficient folding. This chain is Protein GrpE, found in Ehrlichia chaffeensis (strain ATCC CRL-10679 / Arkansas).